Here is a 208-residue protein sequence, read N- to C-terminus: Small ribosomal subunit protein uS4 (208 aa).

The segment at 31–50 (SALDKRAYGPGQHGQRRTKT) is disordered. The 64-residue stretch at 98-161 (RRLDNVVYRM…KSNPQVVRAM (64 aa)) folds into the S4 RNA-binding domain.

It belongs to the universal ribosomal protein uS4 family. In terms of assembly, part of the 30S ribosomal subunit. Contacts protein S5. The interaction surface between S4 and S5 is involved in control of translational fidelity.

One of the primary rRNA binding proteins, it binds directly to 16S rRNA where it nucleates assembly of the body of the 30S subunit. Its function is as follows. With S5 and S12 plays an important role in translational accuracy. This is Small ribosomal subunit protein uS4 from Helicobacter pylori (strain J99 / ATCC 700824) (Campylobacter pylori J99).